The primary structure comprises 396 residues: tRNA-specific 2-thiouridylase MnmA (396 aa).

ATP is bound by residues 11–18 (GLSGGVDS) and methionine 37. The segment at 97–99 (NPD) is interaction with target base in tRNA. Catalysis depends on cysteine 102, which acts as the Nucleophile. A disulfide bridge links cysteine 102 with cysteine 225. Residue glycine 126 participates in ATP binding. Residues 175 to 177 (KDQ) form an interaction with tRNA region. The active-site Cysteine persulfide intermediate is cysteine 225. The tract at residues 343–344 (RY) is interaction with tRNA.

It belongs to the MnmA/TRMU family.

It localises to the cytoplasm. It carries out the reaction S-sulfanyl-L-cysteinyl-[protein] + uridine(34) in tRNA + AH2 + ATP = 2-thiouridine(34) in tRNA + L-cysteinyl-[protein] + A + AMP + diphosphate + H(+). Functionally, catalyzes the 2-thiolation of uridine at the wobble position (U34) of tRNA, leading to the formation of s(2)U34. The chain is tRNA-specific 2-thiouridylase MnmA from Methylibium petroleiphilum (strain ATCC BAA-1232 / LMG 22953 / PM1).